Consider the following 528-residue polypeptide: GMP synthase [glutamine-hydrolyzing] (528 aa).

Residues 13–204 enclose the Glutamine amidotransferase type-1 domain; the sequence is AIVILDFGSQ…VYHICGCEPD (192 aa). Cys-90 serves as the catalytic Nucleophile. Residues His-178 and Glu-180 contribute to the active site. A GMPS ATP-PPase domain is found at 205 to 403; it reads WTTSAFIDEA…LGLPEEIVRR (199 aa). 232–238 contacts ATP; it reads SGGVDSS.

Homodimer.

It carries out the reaction XMP + L-glutamine + ATP + H2O = GMP + L-glutamate + AMP + diphosphate + 2 H(+). It functions in the pathway purine metabolism; GMP biosynthesis; GMP from XMP (L-Gln route): step 1/1. Functionally, catalyzes the synthesis of GMP from XMP. The sequence is that of GMP synthase [glutamine-hydrolyzing] from Parasynechococcus marenigrum (strain WH8102).